A 459-amino-acid chain; its full sequence is mRNA-capping enzyme subunit alpha (459 aa).

Catalysis depends on Lys-70, which acts as the N6-GMP-lysine intermediate. The interval 415 to 459 (MAGGSGRPLPSQSQNATLSTSKPVHSQPPSNDKEPKYVDEDDWSD) is disordered. Positions 424–444 (PSQSQNATLSTSKPVHSQPPS) are enriched in polar residues.

It belongs to the eukaryotic GTase family. In terms of assembly, heterodimer. The mRNA-capping enzyme is composed of two separate chains alpha and beta, respectively a mRNA guanylyltransferase and an mRNA 5'-triphosphate monophosphatase.

It localises to the nucleus. The enzyme catalyses a 5'-end diphospho-ribonucleoside in mRNA + GTP + H(+) = a 5'-end (5'-triphosphoguanosine)-ribonucleoside in mRNA + diphosphate. In terms of biological role, second step of mRNA capping. Transfer of the GMP moiety of GTP to the 5'-diphosphate terminus of RNA via a covalent enzyme-GMP reaction intermediate. The sequence is that of mRNA-capping enzyme subunit alpha (CEG1) from Saccharomyces cerevisiae (strain ATCC 204508 / S288c) (Baker's yeast).